The primary structure comprises 309 residues: Homoserine O-succinyltransferase (309 aa).

C142 serves as the catalytic Acyl-thioester intermediate. K163 and S192 together coordinate substrate. H235 functions as the Proton acceptor in the catalytic mechanism. The active site involves E237. R249 provides a ligand contact to substrate.

It belongs to the MetA family. Homodimer.

The protein localises to the cytoplasm. It catalyses the reaction L-homoserine + succinyl-CoA = O-succinyl-L-homoserine + CoA. Its pathway is amino-acid biosynthesis; L-methionine biosynthesis via de novo pathway; O-succinyl-L-homoserine from L-homoserine: step 1/1. Its function is as follows. Transfers a succinyl group from succinyl-CoA to L-homoserine, forming succinyl-L-homoserine. The chain is Homoserine O-succinyltransferase from Salmonella gallinarum (strain 287/91 / NCTC 13346).